The chain runs to 1159 residues: WASH complex subunit 5 (1159 aa).

Ser917 bears the Phosphoserine mark.

This sequence belongs to the strumpellin family. In terms of assembly, component of the WASH core complex also described as WASH regulatory complex (SHRC) composed of WASH (WASHC1, WASH2P or WASH3P), WASHC2 (WASHC2A or WASHC2C), WASHC3, WASHC4 and WASHC5. The WASH core complex associates via WASHC2 with the F-actin-capping protein dimer (formed by CAPZA1, CAPZA2 or CAPZA3 and CAPZB) in a transient or substoichiometric manner which was initially described as WASH complex. Interacts with VCP, PI4K2A.

The protein localises to the cytoplasm. It is found in the cytosol. It localises to the endoplasmic reticulum. The protein resides in the early endosome. Functionally, acts as a component of the WASH core complex that functions as a nucleation-promoting factor (NPF) at the surface of endosomes, where it recruits and activates the Arp2/3 complex to induce actin polymerization, playing a key role in the fission of tubules that serve as transport intermediates during endosome sorting. May be involved in axonal outgrowth. Involved in cellular localization of ADRB2. Involved in cellular trafficking of BLOC-1 complex cargos such as ATP7A and VAMP7. The sequence is that of WASH complex subunit 5 from Pongo abelii (Sumatran orangutan).